The chain runs to 91 residues: DNA-directed RNA polymerase subunit omega (91 aa).

The protein belongs to the RNA polymerase subunit omega family. The RNAP catalytic core consists of 2 alpha, 1 beta, 1 beta' and 1 omega subunit. When a sigma factor is associated with the core the holoenzyme is formed, which can initiate transcription.

It catalyses the reaction RNA(n) + a ribonucleoside 5'-triphosphate = RNA(n+1) + diphosphate. In terms of biological role, promotes RNA polymerase assembly. Latches the N- and C-terminal regions of the beta' subunit thereby facilitating its interaction with the beta and alpha subunits. The sequence is that of DNA-directed RNA polymerase subunit omega from Erwinia tasmaniensis (strain DSM 17950 / CFBP 7177 / CIP 109463 / NCPPB 4357 / Et1/99).